The chain runs to 285 residues: MKINVSRPLQFLQWSSYIVVAFLIQLLIILPLSILIYHDFYLRLLPADSSNVVPLNTFNILNGVQFGTKFFQSIKSIPVGTDLPQTIDNGLSQLIPMRDNMEYKLDLNLQLYCQSKTDHLNLDNLLIDVYRGPGPLLGAPGGSNSKDEKIFHTSRPIVCLALTDSMSPQEIEQLGPSRLDVYDEEWLNTIRIEDKISLESSYETISVFLKTEIAQRNLIIHPESGIKFRMNFEQGLRNLMLRKRFLSYIIGISIFHCIICVLFFITGCTAFIFVRKGQEKSKKHS.

Over 1 to 16 the chain is Cytoplasmic; that stretch reads MKINVSRPLQFLQWSS. A helical transmembrane segment spans residues 17 to 37; it reads YIVVAFLIQLLIILPLSILIY. Topologically, residues 38–244 are lumenal; it reads HDFYLRLLPA…GLRNLMLRKR (207 aa). The chain crosses the membrane as a helical span at residues 245–265; it reads FLSYIIGISIFHCIICVLFFI. Residues 266–285 lie on the Cytoplasmic side of the membrane; the sequence is TGCTAFIFVRKGQEKSKKHS.

This sequence belongs to the seipin family.

The protein resides in the endoplasmic reticulum membrane. Functionally, involved in lipid metabolism and lipid droplet (LD) morphology, number, and size. Facilitates initiation of LD formation, and ensures that vectorial budding of LDs from the ER is directed towards the cytoplasm. This is Seipin from Saccharomyces cerevisiae (strain ATCC 204508 / S288c) (Baker's yeast).